Here is a 240-residue protein sequence, read N- to C-terminus: Ribonuclease PH (240 aa).

Phosphate-binding positions include arginine 86 and 124-126; that span reads GTR.

The protein belongs to the RNase PH family. As to quaternary structure, homohexameric ring arranged as a trimer of dimers.

It catalyses the reaction tRNA(n+1) + phosphate = tRNA(n) + a ribonucleoside 5'-diphosphate. Functionally, phosphorolytic 3'-5' exoribonuclease that plays an important role in tRNA 3'-end maturation. Removes nucleotide residues following the 3'-CCA terminus of tRNAs; can also add nucleotides to the ends of RNA molecules by using nucleoside diphosphates as substrates, but this may not be physiologically important. Probably plays a role in initiation of 16S rRNA degradation (leading to ribosome degradation) during starvation. This Rhodospirillum rubrum (strain ATCC 11170 / ATH 1.1.1 / DSM 467 / LMG 4362 / NCIMB 8255 / S1) protein is Ribonuclease PH.